The chain runs to 277 residues: 2,3,4,5-tetrahydropyridine-2,6-dicarboxylate N-succinyltransferase (277 aa).

Residues Arg106 and Asp143 each coordinate substrate.

It belongs to the transferase hexapeptide repeat family. In terms of assembly, homotrimer.

The protein localises to the cytoplasm. It catalyses the reaction (S)-2,3,4,5-tetrahydrodipicolinate + succinyl-CoA + H2O = (S)-2-succinylamino-6-oxoheptanedioate + CoA. It participates in amino-acid biosynthesis; L-lysine biosynthesis via DAP pathway; LL-2,6-diaminopimelate from (S)-tetrahydrodipicolinate (succinylase route): step 1/3. This chain is 2,3,4,5-tetrahydropyridine-2,6-dicarboxylate N-succinyltransferase, found in Xylella fastidiosa (strain 9a5c).